A 554-amino-acid polypeptide reads, in one-letter code: Arginine--tRNA ligase (554 aa).

A 'HIGH' region motif is present at residues Ala-132–Gly-142.

This sequence belongs to the class-I aminoacyl-tRNA synthetase family. Monomer.

The protein localises to the cytoplasm. The catalysed reaction is tRNA(Arg) + L-arginine + ATP = L-arginyl-tRNA(Arg) + AMP + diphosphate. The polypeptide is Arginine--tRNA ligase (Kineococcus radiotolerans (strain ATCC BAA-149 / DSM 14245 / SRS30216)).